Consider the following 202-residue polypeptide: Na(+)-translocating NADH-quinone reductase subunit E (202 aa).

Helical transmembrane passes span Ser11–Val31, Met39–Leu59, Leu79–Glu99, Gly114–Val134, Val144–Ile164, and Leu180–Ile200.

This sequence belongs to the NqrDE/RnfAE family. Composed of six subunits; NqrA, NqrB, NqrC, NqrD, NqrE and NqrF.

It is found in the cell inner membrane. It catalyses the reaction a ubiquinone + n Na(+)(in) + NADH + H(+) = a ubiquinol + n Na(+)(out) + NAD(+). Functionally, NQR complex catalyzes the reduction of ubiquinone-1 to ubiquinol by two successive reactions, coupled with the transport of Na(+) ions from the cytoplasm to the periplasm. NqrA to NqrE are probably involved in the second step, the conversion of ubisemiquinone to ubiquinol. In Maridesulfovibrio salexigens (strain ATCC 14822 / DSM 2638 / NCIMB 8403 / VKM B-1763) (Desulfovibrio salexigens), this protein is Na(+)-translocating NADH-quinone reductase subunit E.